Here is a 456-residue protein sequence, read N- to C-terminus: Arginine biosynthesis bifunctional protein ArgJ, mitochondrial (456 aa).

Substrate is bound by residues T184, K213, T224, E311, N451, and T456. The active-site Nucleophile is the T224.

Belongs to the ArgJ family. In terms of assembly, heterodimer of an alpha and a beta chain. The alpha and beta chains are autoproteolytically processed from a single precursor protein within the mitochondrion.

The protein localises to the mitochondrion matrix. It catalyses the reaction N(2)-acetyl-L-ornithine + L-glutamate = N-acetyl-L-glutamate + L-ornithine. The catalysed reaction is L-glutamate + acetyl-CoA = N-acetyl-L-glutamate + CoA + H(+). Its pathway is amino-acid biosynthesis; L-arginine biosynthesis; L-ornithine and N-acetyl-L-glutamate from L-glutamate and N(2)-acetyl-L-ornithine (cyclic): step 1/1. It participates in amino-acid biosynthesis; L-arginine biosynthesis; N(2)-acetyl-L-ornithine from L-glutamate: step 1/4. Its function is as follows. Catalyzes two activities which are involved in the cyclic version of arginine biosynthesis: the synthesis of acetylglutamate from glutamate and acetyl-CoA, and of ornithine by transacetylation between acetylornithine and glutamate. The polypeptide is Arginine biosynthesis bifunctional protein ArgJ, mitochondrial (Aspergillus niger (strain ATCC MYA-4892 / CBS 513.88 / FGSC A1513)).